We begin with the raw amino-acid sequence, 642 residues long: MWRVCARRARSAVPRDGFRARWAALKEGPGAPCGSPRIGPAAVRCGSGIPRYGVRSLCGWSSGSGTVPRNRLLRQLLGSPSRRSYSLPPHQKVPLPSLSPTMQAGTIARWEKKEGEKISEGDLIAEVETDKATVGFESLEECYMAKILVPEGTRDVPVGSIICITVEKPQDIEAFKNYTLDLAAAAAPQAAPAAAPAPAAAPAAPSASAPGSSYPTHMQIVLPALSPTMTMGTVQRWEKKVGEKLSEGDLLAEIETDKATIGFEVQEEGYLAKILVPEGTRDVPLGAPLCIIVEKQEDIAAFADYRPTEVTSLKPQAAPPAPPPVAAVPPTPQPVAPTPSAAPAGPKGRVFVSPLAKKLAAEKGIDLTQVKGTGPEGRIIKKDIDSFVPSKAAPAAAAAMAPPGPRVAPAPAGVFTDIPISNIRRVIAQRLMQSKQTIPHYYLSVDVNMGEVLLVRKELNKMLEGKGKISVNDFIIKASALACLKVPEANSSWMDTVIRQNHVVDVSVAVSTPAGLITPIVFNAHIKGLETIASDVVSLASKAREGKLQPHEFQGGTFTISNLGMFGIKNFSAIINPPQACILAIGASEDKLIPADNEKGFDVASVMSVTLSCDHRVVDGAVGAQWLAEFKKYLEKPITMLL.

Residues 1-85 constitute a mitochondrion transit peptide; the sequence is MWRVCARRAR…LLGSPSRRSY (85 aa). A disordered region spans residues 80–99; the sequence is PSRRSYSLPPHQKVPLPSLS. Lipoyl-binding domains are found at residues 90-166 and 217-293; these read HQKV…CITV and HMQI…CIIV. Position 99 is a phosphoserine (Ser99). Lys131 and Lys258 each carry N6-lipoyllysine. The segment at 313–346 is disordered; that stretch reads LKPQAAPPAPPPVAAVPPTPQPVAPTPSAAPAGP. The segment covering 317 to 337 has biased composition (pro residues); it reads AAPPAPPPVAAVPPTPQPVAP. The region spanning 351–388 is the Peripheral subunit-binding (PSBD) domain; it reads FVSPLAKKLAAEKGIDLTQVKGTGPEGRIIKKDIDSFV. Arg456 contributes to the CoA binding site. Position 461 is an N6-acetyllysine (Lys461). Lys468 is subject to N6-succinyllysine. Ser470 contributes to the CoA binding site. The residue at position 542 (Lys542) is an N6-succinyllysine. CoA contacts are provided by Ser561, Asn562, and Gly586. Catalysis depends on residues His615 and Asp619.

Belongs to the 2-oxoacid dehydrogenase family. As to quaternary structure, part of the pyruvate dehydrogenase complex (PDHc) that is a multi-enzyme complex composed of multiple copies of three enzymes, pyruvate dehydrogenase (subunits PDH1A and PDHB, E1 component), dihydrolipoamide acetyltransferase (DLAT, E2 component), and dihydrolipoamide dehydrogenase (DLD, E3 component) to which is added an additional protein the E3-binding protein (PDHX, E3BP). In terms of structural architecture, the E2 and E3BP components assemble into a 60meric central core with icosahedral symmetry. The central core is decorated with E1 and E3 proteins. Currently, two alternative models for the E2:E3BP stoichiometry are considered as being either 48:12 (E2(48)-E3BP(12)) or 40:20 (E2(40)-E3BP(20)). Interacts with PDK2 and PDK3. Interacts with SIRT4. Interacts with PDHB. (R)-lipoate serves as cofactor. In terms of processing, delipoylated at Lys-131 and Lys-258 by SIRT4, delipoylation decreases the PHD complex activity.

Its subcellular location is the mitochondrion matrix. It catalyses the reaction N(6)-[(R)-dihydrolipoyl]-L-lysyl-[protein] + acetyl-CoA = N(6)-[(R)-S(8)-acetyldihydrolipoyl]-L-lysyl-[protein] + CoA. In terms of biological role, as part of the pyruvate dehydrogenase complex, catalyzes the transfers of an acetyl group to a lipoic acid moiety. The pyruvate dehydrogenase complex, catalyzes the overall conversion of pyruvate to acetyl-CoA and CO(2), and thereby links cytoplasmic glycolysis and the mitochondrial tricarboxylic acid (TCA) cycle. This chain is Dihydrolipoyllysine-residue acetyltransferase component of pyruvate dehydrogenase complex, mitochondrial, found in Mus musculus (Mouse).